Reading from the N-terminus, the 110-residue chain is uncharacterized protein (110 aa).

This sequence belongs to the HesB/IscA family.

This is an uncharacterized protein from Rickettsia prowazekii (strain Madrid E).